The primary structure comprises 244 residues: Cyclin-Q (244 aa).

It belongs to the cyclin family. Cyclin-like FAM58 subfamily.

May be an activating cyclin for the cyclin-associated kinase CDK10. This is Cyclin-Q (ccnq) from Xenopus laevis (African clawed frog).